The sequence spans 366 residues: Gelsolin-like protein 2 (366 aa).

Gelsolin-like repeat units lie at residues 55–139 (NFKV…DLFL), 177–252 (KHIV…HEFY), and 286–327 (KSTV…AQEK). An actin binding region spans residues 100–116 (KSTQDEYCVAAYKTVEL). The actin-actin interfilament contact point stretch occupies residues 104-107 (DEYC).

Belongs to the villin/gelsolin family. As to quaternary structure, interacts with actin monomers and filaments. As to expression, expressed in circular and longitudinal muscle, pseudohearts, pharynx and gizzard. Not expressed in seminal vesicles.

The protein resides in the cytoplasm. It localises to the cytoskeleton. In terms of biological role, calcium-regulated protein that binds to the plus (or barbed) ends of actin monomers or filaments, preventing monomer exchange (end-blocking or capping). Can promote the assembly of monomers into filaments (nucleation) as well as sever existing filaments. The sequence is that of Gelsolin-like protein 2 from Lumbricus terrestris (Common earthworm).